A 112-amino-acid chain; its full sequence is Nucleoid-associated protein BCI_0116 (112 aa).

This sequence belongs to the YbaB/EbfC family. Homodimer.

The protein localises to the cytoplasm. The protein resides in the nucleoid. Its function is as follows. Binds to DNA and alters its conformation. May be involved in regulation of gene expression, nucleoid organization and DNA protection. The chain is Nucleoid-associated protein BCI_0116 from Baumannia cicadellinicola subsp. Homalodisca coagulata.